We begin with the raw amino-acid sequence, 770 residues long: Rho guanine nucleotide exchange factor 38 (770 aa).

The tract at residues 33–88 (KTDTVVDSSVSGDHSGSLRRSQSDRTEYNQKLQEKMTPQAECSSAETPTPEDEQQV) is disordered. Residue Thr-34 is modified to Phosphothreonine. A compositionally biased stretch (low complexity) spans 37 to 47 (VVDSSVSGDHS). Over residues 53–66 (SQSDRTEYNQKLQE) the composition is skewed to basic and acidic residues. Residues 94–285 (KRAKIIRELI…KDINVNINEL (192 aa)) form the DH domain. The BAR domain occupies 327-542 (LKILTRGESQ…VHSLTFVKEN (216 aa)). SH3 domains are found at residues 581–644 (GAEE…PHNP) and 706–769 (VDEQ…KMTY).

Its function is as follows. May act as a guanine-nucleotide releasing factor. This chain is Rho guanine nucleotide exchange factor 38 (Arhgef38), found in Mus musculus (Mouse).